Consider the following 130-residue polypeptide: Small ribosomal subunit protein uS11 (130 aa).

This sequence belongs to the universal ribosomal protein uS11 family. In terms of assembly, part of the 30S ribosomal subunit. Interacts with proteins S7 and S18. Binds to IF-3.

Functionally, located on the platform of the 30S subunit, it bridges several disparate RNA helices of the 16S rRNA. Forms part of the Shine-Dalgarno cleft in the 70S ribosome. This chain is Small ribosomal subunit protein uS11, found in Shewanella baltica (strain OS223).